The primary structure comprises 252 residues: Hydroxyacylglutathione hydrolase (252 aa).

Zn(2+)-binding residues include histidine 54, histidine 56, aspartate 58, histidine 59, histidine 113, aspartate 132, and histidine 170.

The protein belongs to the metallo-beta-lactamase superfamily. Glyoxalase II family. In terms of assembly, monomer. Requires Zn(2+) as cofactor.

The catalysed reaction is an S-(2-hydroxyacyl)glutathione + H2O = a 2-hydroxy carboxylate + glutathione + H(+). The protein operates within secondary metabolite metabolism; methylglyoxal degradation; (R)-lactate from methylglyoxal: step 2/2. In terms of biological role, thiolesterase that catalyzes the hydrolysis of S-D-lactoyl-glutathione to form glutathione and D-lactic acid. This chain is Hydroxyacylglutathione hydrolase, found in Thermosynechococcus vestitus (strain NIES-2133 / IAM M-273 / BP-1).